The following is a 466-amino-acid chain: MAKTLYEKLFDAHVVYEAENETPLLYIDRHLVHEVTSPQAFDGLRAHGRPVRQPGKTFATMDHNVSTQTKDINACGEMARIQMQELIKNCKEFGVELYDLNHPYQGIVHVMGPEQGVTLPGMTIVCGDSHTATHGAFGALAFGIGTSEVEHVLATQTLKQGRAKTMKIEVQGKAAPGITAKDIVLAIIGKTGSAGGTGHVVEFCGEAIRDLSMEGRMTLCNMAIEMGAKAGLVAPDETTFNYVKGRLHAPKGKDFDDAVAYWKTLQTDEGATFDTVVTLQAEEISPQVTWGTNLGQVISVNDNIPDPASFADPVERASAEKALAYMGLKPGIPLTEVAIDKVFIGSCTNSRIEDLRAAAEIAKGRKVAPGVQALVVPGSGPVKAQAEAEGLDKIFIEAGFEWRLPGCSMCLAMNNDRLNPGERCASTSNRNFEGRQGRGGRTHLVSPAMAAAAAVTGHFADIRNIK.

Residues Cys-347, Cys-407, and Cys-410 each coordinate [4Fe-4S] cluster.

The protein belongs to the aconitase/IPM isomerase family. LeuC type 1 subfamily. Heterodimer of LeuC and LeuD. It depends on [4Fe-4S] cluster as a cofactor.

The catalysed reaction is (2R,3S)-3-isopropylmalate = (2S)-2-isopropylmalate. The protein operates within amino-acid biosynthesis; L-leucine biosynthesis; L-leucine from 3-methyl-2-oxobutanoate: step 2/4. In terms of biological role, catalyzes the isomerization between 2-isopropylmalate and 3-isopropylmalate, via the formation of 2-isopropylmaleate. The chain is 3-isopropylmalate dehydratase large subunit from Escherichia coli O139:H28 (strain E24377A / ETEC).